Consider the following 317-residue polypeptide: Acetyl-coenzyme A carboxylase carboxyl transferase subunit alpha (317 aa).

The CoA carboxyltransferase C-terminal domain occupies 39-293 (KLEGKAQEAL…GNAIAEAMGS (255 aa)).

It belongs to the AccA family. As to quaternary structure, acetyl-CoA carboxylase is a heterohexamer composed of biotin carboxyl carrier protein (AccB), biotin carboxylase (AccC) and two subunits each of ACCase subunit alpha (AccA) and ACCase subunit beta (AccD).

The protein resides in the cytoplasm. The catalysed reaction is N(6)-carboxybiotinyl-L-lysyl-[protein] + acetyl-CoA = N(6)-biotinyl-L-lysyl-[protein] + malonyl-CoA. It functions in the pathway lipid metabolism; malonyl-CoA biosynthesis; malonyl-CoA from acetyl-CoA: step 1/1. Functionally, component of the acetyl coenzyme A carboxylase (ACC) complex. First, biotin carboxylase catalyzes the carboxylation of biotin on its carrier protein (BCCP) and then the CO(2) group is transferred by the carboxyltransferase to acetyl-CoA to form malonyl-CoA. This chain is Acetyl-coenzyme A carboxylase carboxyl transferase subunit alpha, found in Azorhizobium caulinodans (strain ATCC 43989 / DSM 5975 / JCM 20966 / LMG 6465 / NBRC 14845 / NCIMB 13405 / ORS 571).